The chain runs to 96 residues: Co-chaperonin GroES (96 aa).

Belongs to the GroES chaperonin family. As to quaternary structure, heptamer of 7 subunits arranged in a ring. Interacts with the chaperonin GroEL.

The protein localises to the cytoplasm. Its function is as follows. Together with the chaperonin GroEL, plays an essential role in assisting protein folding. The GroEL-GroES system forms a nano-cage that allows encapsulation of the non-native substrate proteins and provides a physical environment optimized to promote and accelerate protein folding. GroES binds to the apical surface of the GroEL ring, thereby capping the opening of the GroEL channel. The chain is Co-chaperonin GroES from Coxiella burnetii (strain Dugway 5J108-111).